The following is a 195-amino-acid chain: Interferon omega-2 (195 aa).

The signal sequence occupies residues 1–23; it reads MALLPSLLTALVVYELWPCGALG. 2 cysteine pairs are disulfide-bonded: Cys24–Cys122 and Cys52–Cys162. N-linked (GlcNAc...) asparagine glycosylation occurs at Asn101.

It belongs to the alpha/beta interferon family.

The protein localises to the secreted. This chain is Interferon omega-2, found in Equus caballus (Horse).